A 514-amino-acid polypeptide reads, in one-letter code: 2,3-bisphosphoglycerate-independent phosphoglycerate mutase (514 aa).

2 residues coordinate Mn(2+): D14 and S64. The active-site Phosphoserine intermediate is S64. Substrate contacts are provided by residues H125, 155–156 (RD), R187, R193, 263–266 (RADR), and K336. Mn(2+)-binding residues include D403, H407, D444, H445, and H463.

Belongs to the BPG-independent phosphoglycerate mutase family. Monomer. It depends on Mn(2+) as a cofactor.

The enzyme catalyses (2R)-2-phosphoglycerate = (2R)-3-phosphoglycerate. It participates in carbohydrate degradation; glycolysis; pyruvate from D-glyceraldehyde 3-phosphate: step 3/5. Functionally, catalyzes the interconversion of 2-phosphoglycerate and 3-phosphoglycerate. This is 2,3-bisphosphoglycerate-independent phosphoglycerate mutase from Salmonella paratyphi A (strain ATCC 9150 / SARB42).